A 298-amino-acid chain; its full sequence is HTH-type transcriptional regulator ArgP (298 aa).

One can recognise an HTH lysR-type domain in the interval 4–60 (LDYRWIEALDSVVSKGSFERAAEQLFISQSAVSQRIKQLEKYLAQPVLIREQPPRPT). The segment at residues 21-40 (FERAAEQLFISQSAVSQRIK) is a DNA-binding region (H-T-H motif).

Belongs to the LysR transcriptional regulatory family. In terms of assembly, homodimer.

Controls the transcription of genes involved in arginine and lysine metabolism. The protein is HTH-type transcriptional regulator ArgP of Vibrio cholerae serotype O1 (strain ATCC 39315 / El Tor Inaba N16961).